The primary structure comprises 291 residues: Shikimate dehydrogenase (NADP(+)) (291 aa).

Residues 22-24 (SLS) and Thr-69 each bind shikimate. The active-site Proton acceptor is the Lys-73. Shikimate contacts are provided by Asn-94 and Asp-110. Residues 131–135 (GSGGA) and Leu-226 each bind NADP(+). A shikimate-binding site is contributed by Tyr-228. NADP(+) is bound at residue Gly-249.

This sequence belongs to the shikimate dehydrogenase family. As to quaternary structure, homodimer.

It carries out the reaction shikimate + NADP(+) = 3-dehydroshikimate + NADPH + H(+). The protein operates within metabolic intermediate biosynthesis; chorismate biosynthesis; chorismate from D-erythrose 4-phosphate and phosphoenolpyruvate: step 4/7. Involved in the biosynthesis of the chorismate, which leads to the biosynthesis of aromatic amino acids. Catalyzes the reversible NADPH linked reduction of 3-dehydroshikimate (DHSA) to yield shikimate (SA). The polypeptide is Shikimate dehydrogenase (NADP(+)) (Synechococcus sp. (strain JA-3-3Ab) (Cyanobacteria bacterium Yellowstone A-Prime)).